We begin with the raw amino-acid sequence, 502 residues long: Probable cytosol aminopeptidase (502 aa).

Mn(2+)-binding residues include Lys-269 and Asp-274. Lys-281 is a catalytic residue. Asp-292, Asp-351, and Glu-353 together coordinate Mn(2+). Arg-355 is a catalytic residue.

It belongs to the peptidase M17 family. It depends on Mn(2+) as a cofactor.

It localises to the cytoplasm. The catalysed reaction is Release of an N-terminal amino acid, Xaa-|-Yaa-, in which Xaa is preferably Leu, but may be other amino acids including Pro although not Arg or Lys, and Yaa may be Pro. Amino acid amides and methyl esters are also readily hydrolyzed, but rates on arylamides are exceedingly low.. It catalyses the reaction Release of an N-terminal amino acid, preferentially leucine, but not glutamic or aspartic acids.. Its function is as follows. Presumably involved in the processing and regular turnover of intracellular proteins. Catalyzes the removal of unsubstituted N-terminal amino acids from various peptides. The chain is Probable cytosol aminopeptidase from Vibrio campbellii (strain ATCC BAA-1116).